We begin with the raw amino-acid sequence, 1310 residues long: Adhesion G protein-coupled receptor A3 (1310 aa).

Positions 1 to 27 (MEPPPPLLLLPLALLALLWGGERGAAA) are cleaved as a signal peptide. Positions 28–70 (LPAGCKHDGRARGTGRAAAAAEGKVVCSSLELAQVLPPDTLPN) constitute an LRRNT domain. The Extracellular segment spans residues 28–747 (LPAGCKHDGR…TELYTPAASL (720 aa)). N70 and N87 each carry an N-linked (GlcNAc...) asparagine glycan. LRR repeat units follow at residues 71 to 92 (RTVTLILSNNKISELKNGSFSG), 95 to 116 (LLERLDLRNNLISRIAPGAFWG), 119 to 140 (SLKRLDLTNNRIGCLNADVFRG), and 143 to 164 (NLVRLNLSGNLFTSLSQGTFDY). N-linked (GlcNAc...) asparagine glycans are attached at residues N148, N195, N290, N321, N422, N442, N581, N641, N676, and N717. The LRRCT domain maps to 176–226 (EYLLCDCNILWMHRWVKERNITVRDTRCVYPKSLQAQPVTGVKQELLTCDP). In terms of domain architecture, Ig-like spans 231–329 (PSFYMTPSHR…GNNTRTVDIV (99 aa)). An intrachain disulfide couples C253 to C313. The GAIN-B domain occupies 572-739 (LDKQLSFKCN…AVLMDLTGTE (168 aa)). The tract at residues 690–739 (AAQWDFDLLNGQGGWKSDGCCILYSDENITTIQCGSLGNYAVLMDLTGTE) is GPS. Cysteines 709 and 723 form a disulfide. A helical transmembrane segment spans residues 748–768 (LHPVVYTTAITLLLCLLAVII). Topologically, residues 769-785 (SYMYHHSLIRISLKSWH) are cytoplasmic. The helical transmembrane segment at 786–806 (MLVNLCFHILLTCVVFVGGIT) threads the bilayer. Over 807–815 (QTRNASVCQ) the chain is Extracellular. N-linked (GlcNAc...) asparagine glycosylation occurs at N810. The helical transmembrane segment at 816–836 (AVGIILHYSTLATVLWVGVTA) threads the bilayer. Topologically, residues 837–865 (RNIYKQVTKKAKRCQDPDEPPAPPRPMLR) are cytoplasmic. A helical transmembrane segment spans residues 866–886 (FYLIGGGIPIIVCGITAAANI). At 887–908 (KNYGSRPSAPYCWMAWEPSLGA) the chain is on the extracellular side. A helical transmembrane segment spans residues 909–929 (FYGPASFITFVNCMYFLSIFI). Topologically, residues 930-985 (QLKRHPERKYELKEPTEEQQRLAANENGEINHQDSMSLSLISTSTLENEHSFQSQL) are cytoplasmic. A helical membrane pass occupies residues 986 to 1006 (LGASLTLLLYVILWMFGAMAV). Over 1007–1013 (SLYYPLD) the chain is Extracellular. Residues 1014-1034 (LVFSFFFGATCLSFSAFMMVH) traverse the membrane as a helical segment. Residues 1035-1310 (HCINREDVRL…TGLWKHETTV (276 aa)) lie on the Cytoplasmic side of the membrane. 3 disordered regions span residues 1065–1084 (PPNSSATNGEAPKCTNSSAE), 1187–1208 (VEGSVQNGLPKSRPGSNEGHSR), and 1221–1264 (YNPP…ADLE). The span at 1222 to 1239 (NPPQQDSSDACSTLPKSS) shows a compositional bias: polar residues. Residues 1308-1310 (TTV) carry the PDZ-binding motif.

This sequence belongs to the G-protein coupled receptor 2 family. Adhesion G-protein coupled receptor (ADGR) subfamily. Interacts (via PDZ-binding motif) with DLG1. In terms of tissue distribution, expressed by spermatogonial progenitor cells located within the outer cell layer of the seminiferous tubule and by multipotent adult spermatogonial-derived stem cells.

It is found in the membrane. Its function is as follows. Orphan receptor that may have a role in planar cell polarity pathway. This is Adhesion G protein-coupled receptor A3 (Adgra3) from Mus musculus (Mouse).